The sequence spans 145 residues: D-aminoacyl-tRNA deacylase (145 aa).

A Gly-cisPro motif, important for rejection of L-amino acids motif is present at residues glycine 137–proline 138.

This sequence belongs to the DTD family. As to quaternary structure, homodimer.

Its subcellular location is the cytoplasm. It catalyses the reaction glycyl-tRNA(Ala) + H2O = tRNA(Ala) + glycine + H(+). The enzyme catalyses a D-aminoacyl-tRNA + H2O = a tRNA + a D-alpha-amino acid + H(+). Its function is as follows. An aminoacyl-tRNA editing enzyme that deacylates mischarged D-aminoacyl-tRNAs. Also deacylates mischarged glycyl-tRNA(Ala), protecting cells against glycine mischarging by AlaRS. Acts via tRNA-based rather than protein-based catalysis; rejects L-amino acids rather than detecting D-amino acids in the active site. By recycling D-aminoacyl-tRNA to D-amino acids and free tRNA molecules, this enzyme counteracts the toxicity associated with the formation of D-aminoacyl-tRNA entities in vivo and helps enforce protein L-homochirality. In Teredinibacter turnerae (strain ATCC 39867 / T7901), this protein is D-aminoacyl-tRNA deacylase.